Here is a 362-residue protein sequence, read N- to C-terminus: 3-dehydroquinate synthase (362 aa).

Residues 72-77, 106-110, 130-131, Lys-143, and Lys-152 contribute to the NAD(+) site; these read DGEAHK, GVIGD, and TT. 3 residues coordinate Zn(2+): Glu-185, His-248, and His-265.

Belongs to the sugar phosphate cyclases superfamily. Dehydroquinate synthase family. Co(2+) is required as a cofactor. It depends on Zn(2+) as a cofactor. The cofactor is NAD(+).

Its subcellular location is the cytoplasm. It catalyses the reaction 7-phospho-2-dehydro-3-deoxy-D-arabino-heptonate = 3-dehydroquinate + phosphate. It functions in the pathway metabolic intermediate biosynthesis; chorismate biosynthesis; chorismate from D-erythrose 4-phosphate and phosphoenolpyruvate: step 2/7. In terms of biological role, catalyzes the conversion of 3-deoxy-D-arabino-heptulosonate 7-phosphate (DAHP) to dehydroquinate (DHQ). The polypeptide is 3-dehydroquinate synthase (Laribacter hongkongensis (strain HLHK9)).